The primary structure comprises 426 residues: Serine--tRNA ligase (426 aa).

L-serine is bound at residue 233-235; the sequence is TAE. 264–266 provides a ligand contact to ATP; that stretch reads RRE. Glutamate 287 is a binding site for L-serine. Residue 351–354 coordinates ATP; the sequence is EISS. Position 386 (serine 386) interacts with L-serine.

It belongs to the class-II aminoacyl-tRNA synthetase family. Type-1 seryl-tRNA synthetase subfamily. Homodimer. The tRNA molecule binds across the dimer.

The protein localises to the cytoplasm. It catalyses the reaction tRNA(Ser) + L-serine + ATP = L-seryl-tRNA(Ser) + AMP + diphosphate + H(+). The catalysed reaction is tRNA(Sec) + L-serine + ATP = L-seryl-tRNA(Sec) + AMP + diphosphate + H(+). Its pathway is aminoacyl-tRNA biosynthesis; selenocysteinyl-tRNA(Sec) biosynthesis; L-seryl-tRNA(Sec) from L-serine and tRNA(Sec): step 1/1. Its function is as follows. Catalyzes the attachment of serine to tRNA(Ser). Is also able to aminoacylate tRNA(Sec) with serine, to form the misacylated tRNA L-seryl-tRNA(Sec), which will be further converted into selenocysteinyl-tRNA(Sec). In Prochlorococcus marinus (strain NATL2A), this protein is Serine--tRNA ligase.